The chain runs to 321 residues: Transaldolase (321 aa).

The active-site Schiff-base intermediate with substrate is the lysine 132.

This sequence belongs to the transaldolase family. Type 1 subfamily. In terms of assembly, homodimer.

The protein resides in the cytoplasm. The catalysed reaction is D-sedoheptulose 7-phosphate + D-glyceraldehyde 3-phosphate = D-erythrose 4-phosphate + beta-D-fructose 6-phosphate. It functions in the pathway carbohydrate degradation; pentose phosphate pathway; D-glyceraldehyde 3-phosphate and beta-D-fructose 6-phosphate from D-ribose 5-phosphate and D-xylulose 5-phosphate (non-oxidative stage): step 2/3. Functionally, transaldolase is important for the balance of metabolites in the pentose-phosphate pathway. In Marinobacter nauticus (strain ATCC 700491 / DSM 11845 / VT8) (Marinobacter aquaeolei), this protein is Transaldolase.